Reading from the N-terminus, the 229-residue chain is Demethylmenaquinone methyltransferase (229 aa).

S-adenosyl-L-methionine contacts are provided by residues Thr58, Asp78, and 100–101 (DA).

It belongs to the class I-like SAM-binding methyltransferase superfamily. MenG/UbiE family.

It carries out the reaction a 2-demethylmenaquinol + S-adenosyl-L-methionine = a menaquinol + S-adenosyl-L-homocysteine + H(+). It participates in quinol/quinone metabolism; menaquinone biosynthesis; menaquinol from 1,4-dihydroxy-2-naphthoate: step 2/2. In terms of biological role, methyltransferase required for the conversion of demethylmenaquinol (DMKH2) to menaquinol (MKH2). The polypeptide is Demethylmenaquinone methyltransferase (Thermotoga maritima (strain ATCC 43589 / DSM 3109 / JCM 10099 / NBRC 100826 / MSB8)).